A 103-amino-acid chain; its full sequence is Small ribosomal subunit protein uS10 (103 aa).

Belongs to the universal ribosomal protein uS10 family. As to quaternary structure, part of the 30S ribosomal subunit.

Its function is as follows. Involved in the binding of tRNA to the ribosomes. This Chlorobium chlorochromatii (strain CaD3) protein is Small ribosomal subunit protein uS10.